Consider the following 634-residue polypeptide: NRPS-independent siderophore synthetase rfs (634 aa).

Functionally, NRPS-independent siderophore synthetase that catalyzes the rhizoferrin biosynthesis from citrate and diaminobutane via an ATP-dependent condensation of citrate with diaminobutane followed by the addition of a second citrate to the monocitryl-diaminobutane intermediate. Can also use as substrates the citrate and diaminobutane homologs oxaloacetic acid, diaminopropane, diaminobutane, diaminopentane, tricarballylic acid, hydroxylamine and ornithine. Forms only a mono-substituted intermediate with oxaloacetic acid and diaminopentane whereas both mono-citryl intermediates and full rhizoferrin derivatives were detected when diaminopropane, and ornithine were used as substrates. Tricarballylic acid only forms a rhizoferrin derivative, but no mono-substituted intermediate. The chain is NRPS-independent siderophore synthetase rfs from Rhizopus delemar (strain RA 99-880 / ATCC MYA-4621 / FGSC 9543 / NRRL 43880) (Mucormycosis agent).